We begin with the raw amino-acid sequence, 130 residues long: Small ribosomal subunit protein uS8 (130 aa).

It belongs to the universal ribosomal protein uS8 family. Part of the 30S ribosomal subunit. Contacts proteins S5 and S12.

Its function is as follows. One of the primary rRNA binding proteins, it binds directly to 16S rRNA central domain where it helps coordinate assembly of the platform of the 30S subunit. This is Small ribosomal subunit protein uS8 from Pectobacterium carotovorum subsp. carotovorum (strain PC1).